A 252-amino-acid chain; its full sequence is Hydroxyacylglutathione hydrolase (252 aa).

Zn(2+) is bound by residues histidine 54, histidine 56, aspartate 58, histidine 59, histidine 111, aspartate 130, and histidine 170.

It belongs to the metallo-beta-lactamase superfamily. Glyoxalase II family. As to quaternary structure, monomer. The cofactor is Zn(2+).

The catalysed reaction is an S-(2-hydroxyacyl)glutathione + H2O = a 2-hydroxy carboxylate + glutathione + H(+). Its pathway is secondary metabolite metabolism; methylglyoxal degradation; (R)-lactate from methylglyoxal: step 2/2. In terms of biological role, thiolesterase that catalyzes the hydrolysis of S-D-lactoyl-glutathione to form glutathione and D-lactic acid. The sequence is that of Hydroxyacylglutathione hydrolase from Francisella tularensis subsp. tularensis (strain FSC 198).